Reading from the N-terminus, the 608-residue chain is Aspartate--tRNA(Asp/Asn) ligase (608 aa).

Glu-187 is an L-aspartate binding site. The tract at residues 211 to 214 is aspartate; that stretch reads QQFK. L-aspartate is bound by residues Arg-233 and His-461. 233–235 lines the ATP pocket; sequence RDE. Glu-495 provides a ligand contact to ATP. Arg-502 provides a ligand contact to L-aspartate. 547–550 is an ATP binding site; that stretch reads GLDR.

The protein belongs to the class-II aminoacyl-tRNA synthetase family. Type 1 subfamily. Homodimer.

The protein localises to the cytoplasm. It carries out the reaction tRNA(Asx) + L-aspartate + ATP = L-aspartyl-tRNA(Asx) + AMP + diphosphate. Its function is as follows. Aspartyl-tRNA synthetase with relaxed tRNA specificity since it is able to aspartylate not only its cognate tRNA(Asp) but also tRNA(Asn). Reaction proceeds in two steps: L-aspartate is first activated by ATP to form Asp-AMP and then transferred to the acceptor end of tRNA(Asp/Asn). The polypeptide is Aspartate--tRNA(Asp/Asn) ligase (Prosthecochloris aestuarii (strain DSM 271 / SK 413)).